Consider the following 395-residue polypeptide: Flap endonuclease 1 (395 aa).

An N-domain region spans residues 1-104 (MGIKHLYQVI…GELAKRSARK (104 aa)). Asp34 provides a ligand contact to Mg(2+). 2 residues coordinate DNA: Arg47 and Arg70. Asp86 is a Mg(2+) binding site. Residues 94-124 (GGELAKRSARKREAHEAHEEAKETGTAEDME) are disordered. The segment at 122 to 253 (DMEKFSRRTV…NTALKLIREH (132 aa)) is I-domain. Mg(2+) is bound by residues Glu158, Glu160, Asp179, and Asp181. Glu158 serves as a coordination point for DNA. Residues Gly231 and Asp233 each contribute to the DNA site. Position 233 (Asp233) interacts with Mg(2+). The interaction with PCNA stretch occupies residues 341–349 (QQSRLEGFF). The segment covering 356-389 (DAEKASMKRKHDEKIEEQKKRKKEDAKAKKEAKA) has biased composition (basic and acidic residues). The interval 356 to 395 (DAEKASMKRKHDEKIEEQKKRKKEDAKAKKEAKARPRGAV) is disordered.

The protein belongs to the XPG/RAD2 endonuclease family. FEN1 subfamily. As to quaternary structure, interacts with PCNA. Three molecules of fen1 bind to one PCNA trimer with each molecule binding to one PCNA monomer. PCNA stimulates the nuclease activity without altering cleavage specificity. Requires Mg(2+) as cofactor. Phosphorylated. Phosphorylation upon DNA damage induces relocalization to the nuclear plasma.

It is found in the nucleus. The protein resides in the nucleolus. Its subcellular location is the nucleoplasm. The protein localises to the mitochondrion. In terms of biological role, structure-specific nuclease with 5'-flap endonuclease and 5'-3' exonuclease activities involved in DNA replication and repair. During DNA replication, cleaves the 5'-overhanging flap structure that is generated by displacement synthesis when DNA polymerase encounters the 5'-end of a downstream Okazaki fragment. It enters the flap from the 5'-end and then tracks to cleave the flap base, leaving a nick for ligation. Also involved in the long patch base excision repair (LP-BER) pathway, by cleaving within the apurinic/apyrimidinic (AP) site-terminated flap. Acts as a genome stabilization factor that prevents flaps from equilibrating into structures that lead to duplications and deletions. Also possesses 5'-3' exonuclease activity on nicked or gapped double-stranded DNA, and exhibits RNase H activity. Also involved in replication and repair of rDNA and in repairing mitochondrial DNA. This Talaromyces marneffei (strain ATCC 18224 / CBS 334.59 / QM 7333) (Penicillium marneffei) protein is Flap endonuclease 1 (fen1).